A 164-amino-acid polypeptide reads, in one-letter code: Phosphopantetheine adenylyltransferase (164 aa).

Position 10 (Ser-10) interacts with substrate. ATP-binding positions include 10-11 (SF) and His-18. Positions 42, 74, and 88 each coordinate substrate. ATP contacts are provided by residues 89 to 91 (GLR), Glu-99, and 124 to 130 (YSFLSSS).

This sequence belongs to the bacterial CoaD family. In terms of assembly, homohexamer. Mg(2+) is required as a cofactor.

Its subcellular location is the cytoplasm. The enzyme catalyses (R)-4'-phosphopantetheine + ATP + H(+) = 3'-dephospho-CoA + diphosphate. The protein operates within cofactor biosynthesis; coenzyme A biosynthesis; CoA from (R)-pantothenate: step 4/5. Reversibly transfers an adenylyl group from ATP to 4'-phosphopantetheine, yielding dephospho-CoA (dPCoA) and pyrophosphate. The protein is Phosphopantetheine adenylyltransferase of Exiguobacterium sp. (strain ATCC BAA-1283 / AT1b).